The sequence spans 307 residues: Holliday junction branch migration complex subunit RuvB (307 aa).

The interval 1–167 (MKLQIKPPNT…FGVILNINYY (167 aa)) is large ATPase domain (RuvB-L). ATP contacts are provided by Ile5, Gly48, Lys51, Thr52, Thr53, Arg157, Tyr167, and Arg204. Thr52 is a Mg(2+) binding site. A small ATPAse domain (RuvB-S) region spans residues 168 to 233 (SNAEIEKMVS…DLEGLFKNLM (66 aa)). The tract at residues 236-307 (KNGLQSIDVQ…NSGREYLVNF (72 aa)) is head domain (RuvB-H). Positions 270, 289, and 294 each coordinate DNA.

The protein belongs to the RuvB family. Homohexamer. Forms an RuvA(8)-RuvB(12)-Holliday junction (HJ) complex. HJ DNA is sandwiched between 2 RuvA tetramers; dsDNA enters through RuvA and exits via RuvB. An RuvB hexamer assembles on each DNA strand where it exits the tetramer. Each RuvB hexamer is contacted by two RuvA subunits (via domain III) on 2 adjacent RuvB subunits; this complex drives branch migration. In the full resolvosome a probable DNA-RuvA(4)-RuvB(12)-RuvC(2) complex forms which resolves the HJ.

It localises to the cytoplasm. The catalysed reaction is ATP + H2O = ADP + phosphate + H(+). Functionally, the RuvA-RuvB-RuvC complex processes Holliday junction (HJ) DNA during genetic recombination and DNA repair, while the RuvA-RuvB complex plays an important role in the rescue of blocked DNA replication forks via replication fork reversal (RFR). RuvA specifically binds to HJ cruciform DNA, conferring on it an open structure. The RuvB hexamer acts as an ATP-dependent pump, pulling dsDNA into and through the RuvAB complex. RuvB forms 2 homohexamers on either side of HJ DNA bound by 1 or 2 RuvA tetramers; 4 subunits per hexamer contact DNA at a time. Coordinated motions by a converter formed by DNA-disengaged RuvB subunits stimulates ATP hydrolysis and nucleotide exchange. Immobilization of the converter enables RuvB to convert the ATP-contained energy into a lever motion, pulling 2 nucleotides of DNA out of the RuvA tetramer per ATP hydrolyzed, thus driving DNA branch migration. The RuvB motors rotate together with the DNA substrate, which together with the progressing nucleotide cycle form the mechanistic basis for DNA recombination by continuous HJ branch migration. Branch migration allows RuvC to scan DNA until it finds its consensus sequence, where it cleaves and resolves cruciform DNA. The polypeptide is Holliday junction branch migration complex subunit RuvB (Mycoplasma genitalium (strain ATCC 33530 / DSM 19775 / NCTC 10195 / G37) (Mycoplasmoides genitalium)).